Consider the following 381-residue polypeptide: Chorismate synthase (381 aa).

NADP(+) is bound by residues Arg-41 and Arg-47. FMN contacts are provided by residues 127–129 (RAS), 247–248 (QA), Gly-291, 306–310 (KPIPT), and Arg-332.

The protein belongs to the chorismate synthase family. In terms of assembly, homotetramer. FMNH2 is required as a cofactor.

It catalyses the reaction 5-O-(1-carboxyvinyl)-3-phosphoshikimate = chorismate + phosphate. Its pathway is metabolic intermediate biosynthesis; chorismate biosynthesis; chorismate from D-erythrose 4-phosphate and phosphoenolpyruvate: step 7/7. Catalyzes the anti-1,4-elimination of the C-3 phosphate and the C-6 proR hydrogen from 5-enolpyruvylshikimate-3-phosphate (EPSP) to yield chorismate, which is the branch point compound that serves as the starting substrate for the three terminal pathways of aromatic amino acid biosynthesis. This reaction introduces a second double bond into the aromatic ring system. This chain is Chorismate synthase, found in Anaeromyxobacter sp. (strain K).